Here is a 121-residue protein sequence, read N- to C-terminus: Large ribosomal subunit protein uL14 (121 aa).

It belongs to the universal ribosomal protein uL14 family. Part of the 50S ribosomal subunit. Forms a cluster with proteins L3 and L19. In the 70S ribosome, L14 and L19 interact and together make contacts with the 16S rRNA in bridges B5 and B8.

In terms of biological role, binds to 23S rRNA. Forms part of two intersubunit bridges in the 70S ribosome. In Prochlorococcus marinus (strain MIT 9303), this protein is Large ribosomal subunit protein uL14.